A 161-amino-acid polypeptide reads, in one-letter code: Endoribonuclease YbeY (161 aa).

Residues His121, His125, and His131 each contribute to the Zn(2+) site.

Belongs to the endoribonuclease YbeY family. Zn(2+) serves as cofactor.

The protein resides in the cytoplasm. Single strand-specific metallo-endoribonuclease involved in late-stage 70S ribosome quality control and in maturation of the 3' terminus of the 16S rRNA. The sequence is that of Endoribonuclease YbeY from Stenotrophomonas maltophilia (strain K279a).